The following is an 837-amino-acid chain: MSLSHLYRDGEGRIDDDDDERENFEITDWDLQNEFNPNRQRHWQTKEEATYGVWAERDSDDERPSFGGKRARDYSAPVNFISAGLKKGAAEEAELEDSDDEEKPVKQDDFPKDFGPRKLKTGGNFKPSQKGFAGGTKSFMDFGSWERHTKGIGQKLLQKMGYVPGRGLGKNAQGIINPIEAKQRKGKGAVGAYGSERTTQSMQDFPVVDSEEEAEEEFQKELSQWRKDPSGSKKKPKYSYKTVEELKAKGRISKKLTAPQKELSQVKVIDMTGREQKVYYSYSQISHKHNVPDDGLPLQSQQLPQSGKEAKAPGFALSELEHNLQLLIDLTEQEIIQNDRQLQYERDMVVNLFHELEKMTEVLDHEERVIFNLSKVLEMVEECERRMQPNCSNPLTLDECARIFETLQDKYYEEYRMSDRVDLAVAIVYPLMKEYFKEWDPLKDCTYGTEIISKWKSLLENDQLLSHGGQDLSADAFHRLIWEVWMPFVRNIVTQWQPRNCDPMVDFLDSWVHIIPVWILDNILDQLIFPKLQKEVENWNPLTDTVPIHSWIHPWLPLMQARLEPLYSPIRSKLSSALQKWHPSDSSAKLILQPWKDVFTPGSWEAFMVKNIVPKLGMCLGELVINPHQQHMDAFYWVIDWEGMISVSSLVGLLEKHFFPKWLQVLCSWLSNSPNYEEITKWYLGWKSMFSDQVLAHPSVKDKFNEALDIMNRAVSSNVGAYMQPGARENIAYLTHTERRKDFQYEAMQERREAENMAQRGIGVAASSVPMNFKDLIETKAEEHNIVFMPVIGKRHEGKQLYTFGRIVIYIDRGVVFVQGEKTWVPTSLQSLIDMAK.

2 stretches are compositionally biased toward basic and acidic residues: residues 1 to 13 (MSLS…GEGR) and 53 to 64 (VWAERDSDDERP). Disordered stretches follow at residues 1 to 21 (MSLS…DDER), 53 to 72 (VWAE…KRAR), and 85 to 133 (LKKG…KGFA). The interval 1 to 50 (MSLSHLYRDGEGRIDDDDDERENFEITDWDLQNEFNPNRQRHWQTKEEAT) is required for interaction with DHX15. Ser2, Ser59, and Ser98 each carry phosphoserine. Residues 91–102 (EEAELEDSDDEE) show a composition bias toward acidic residues. Residues 103–116 (KPVKQDDFPKDFGP) are compositionally biased toward basic and acidic residues. Phosphoserine is present on Ser144. Residues 149–195 (TKGIGQKLLQKMGYVPGRGLGKNAQGIINPIEAKQRKGKGAVGAYGS) enclose the G-patch domain. Positions 179–236 (IEAKQRKGKGAVGAYGSERTTQSMQDFPVVDSEEEAEEEFQKELSQWRKDPSGSKKKP) are disordered. Ser210 carries the phosphoserine modification. Basic and acidic residues predominate over residues 217 to 231 (EFQKELSQWRKDPSG). The Nuclear localization signal signature appears at 700–705 (VKDKFN). The required for nuclear speckle localization stretch occupies residues 710–734 (IMNRAVSSNVGAYMQPGARENIAYL).

This sequence belongs to the TFP11/STIP family. In terms of assembly, identified in the spliceosome C complex. Found in the Intron Large (IL) complex, a post-mRNA release spliceosomal complex containing the excised intron, U2, U5 and U6 snRNPs, and splicing factors. Interacts with TUFT1. Interacts with DHX15; indicative for a recruitment of DHX15 to the IL complex. Interacts with GCFC2.

The protein localises to the cytoplasm. It is found in the nucleus. In terms of biological role, involved in pre-mRNA splicing, specifically in spliceosome disassembly during late-stage splicing events. Intron turnover seems to proceed through reactions in two lariat-intron associated complexes termed Intron Large (IL) and Intron Small (IS). In cooperation with DHX15 seems to mediate the transition of the U2, U5 and U6 snRNP-containing IL complex to the snRNP-free IS complex leading to efficient debranching and turnover of excised introns. May play a role in the differentiation of ameloblasts and odontoblasts or in the forming of the enamel extracellular matrix. In Pongo abelii (Sumatran orangutan), this protein is Tuftelin-interacting protein 11 (TFIP11).